The primary structure comprises 500 residues: Gamma-glutamylanilide synthase (500 aa).

One can recognise a GS beta-grasp domain in the interval 32–136 (LGLEMIRLSW…MLADLHWKSG (105 aa)). In terms of domain architecture, GS catalytic spans 143 to 500 (PRGIMKKAVK…WEQKEYFNLL (358 aa)).

It belongs to the glutamine synthetase family. As to quaternary structure, homohexamer.

It catalyses the reaction aniline + L-glutamate + ATP = N(5)-phenyl-L-glutamine + ADP + phosphate. Involved in the initial oxidation of aniline to catechol by the release of its amino group. Catalyzes the ATP-dependent ligation of L-glutamate to aniline to yield gamma-glutamylanilide (gamma-GA). AtdA1 has a broad substrate range and is able to convert the following anilines, including chlorinated and methylated forms of aniline: aniline (100%), o-chloroaniline (92%), m-chloroaniline (69%), p-chloroaniline (92%), o-methylaniline (40%), m-methylaniline (27%) and p-methylaniline (45%). The protein is Gamma-glutamylanilide synthase of Acinetobacter sp.